The following is an 829-amino-acid chain: Colorectal mutant cancer protein (829 aa).

Disordered regions lie at residues 114 to 139, 282 to 320, and 672 to 700; these read RSEL…TSVS, TRLQ…SSND, and EEQK…CADA. Residues 123–132 are compositionally biased toward basic and acidic residues; sequence EVNEDSRSMD. Over residues 285–312 the composition is skewed to polar residues; sequence QSVQATGPSSPGRLTSTNRPINPSTGEL. Over residues 689–698 the composition is skewed to basic and acidic residues; that stretch reads SKDKPGKECA. Positions 766 to 782 match the Nuclear localization signal motif; sequence KRANSNLVAAYEKAKKK. The PDZ-binding motif lies at 826–829; sequence ETSL. A Phosphoserine modification is found at serine 828.

This sequence belongs to the MCC family. Interacts with SCRIB (via phosphorylated PDZ-binding motif), EZR, SNX27, NHERF1 and NHERF2. Interacts with CTNNB1; the interaction is enhanced upon Wnt stimulation. Interacts with MYH10. Interacts with CCAR2. As to expression, expressed in a variety of tissues.

Its subcellular location is the cell membrane. It is found in the cell projection. It localises to the lamellipodium. The protein localises to the nucleus. The protein resides in the cytoplasm. In terms of biological role, candidate for the putative colorectal tumor suppressor gene located at 5q21. Suppresses cell proliferation and the Wnt/b-catenin pathway in colorectal cancer cells. Inhibits DNA binding of b-catenin/TCF/LEF transcription factors. Involved in cell migration independently of RAC1, CDC42 and p21-activated kinase (PAK) activation. Represses the beta-catenin pathway (canonical Wnt signaling pathway) in a CCAR2-dependent manner by sequestering CCAR2 to the cytoplasm, thereby impairing its ability to inhibit SIRT1 which is involved in the deacetylation and negative regulation of beta-catenin (CTNB1) transcriptional activity. This Homo sapiens (Human) protein is Colorectal mutant cancer protein (MCC).